Here is a 329-residue protein sequence, read N- to C-terminus: DNA repair protein RAD51 homolog 4 (329 aa).

Positions 1 to 83 are preferentially binds ssDNA; sequence MGMLRAGLCP…ELKTSTAILS (83 aa). Residues 4–77 are interaction with XRCC2; the sequence is LRAGLCPGLT…GADLYEELKT (74 aa). Residues 77–328 are interaction with RAD51C; it reads TSTAILSTGI…EQSPELPGKQ (252 aa). Residue 107 to 114 participates in ATP binding; that stretch reads GGPGSGKT.

This sequence belongs to the RecA family. RAD51 subfamily. As to quaternary structure, part of the BCDX2 complex consisting of RAD51B, RAD51C, RAD51D and XRCC2; the complex has a ring-like structure arranged into a flat disc around a central channel. In the absence of DNA, the BCDX2 subcomplex XRCC2:RAD51D formed a multimeric ring structure; in the presence of single-stranded DNA it formed a filamentous structure with the ssDNA. Interacts with SWSAP1 and ZSWIM7; involved in homologous recombination repair. Interacts with BLM; required for stimulation of BLM activity by the BCDX2 subcomplex XRCC2:RAD51D. In terms of tissue distribution, highly expressed in brain followed by testis. Also expressed in heart, liver, kidney, spleen, lung and skeletal muscle.

It is found in the nucleus. Its subcellular location is the chromosome. The protein resides in the telomere. In terms of biological role, involved in the homologous recombination repair (HRR) pathway of double-stranded DNA breaks arising during DNA replication or induced by DNA-damaging agents. Bind to single-stranded DNA (ssDNA) and has DNA-dependent ATPase activity. Part of the RAD51 paralog protein complex BCDX2 which acts in the BRCA1-BRCA2-dependent HR pathway. Upon DNA damage, BCDX2 acts downstream of BRCA2 recruitment and upstream of RAD51 recruitment. BCDX2 binds predominantly to the intersection of the four duplex arms of the Holliday junction and to junction of replication forks. The BCDX2 complex was originally reported to bind single-stranded DNA, single-stranded gaps in duplex DNA and specifically to nicks in duplex DNA. Involved in telomere maintenance. The BCDX2 subcomplex XRCC2:RAD51D can stimulate Holliday junction resolution by BLM. The sequence is that of DNA repair protein RAD51 homolog 4 (Rad51d) from Mus musculus (Mouse).